The sequence spans 147 residues: 3-dehydroquinate dehydratase (147 aa).

Residue Tyr23 is the Proton acceptor of the active site. Asn74, His80, and Asp87 together coordinate substrate. His100 serves as the catalytic Proton donor. Substrate is bound by residues 101–102 (LS) and Arg111.

The protein belongs to the type-II 3-dehydroquinase family. As to quaternary structure, homododecamer.

It carries out the reaction 3-dehydroquinate = 3-dehydroshikimate + H2O. The protein operates within metabolic intermediate biosynthesis; chorismate biosynthesis; chorismate from D-erythrose 4-phosphate and phosphoenolpyruvate: step 3/7. Catalyzes a trans-dehydration via an enolate intermediate. The chain is 3-dehydroquinate dehydratase from Clostridium botulinum (strain ATCC 19397 / Type A).